Consider the following 492-residue polypeptide: Adenosylhomocysteinase (492 aa).

The substrate site is built by Thr68, Asp153, and Glu215. NAD(+) is bound at residue 216-218 (TTT). Substrate-binding residues include Lys245 and Asp249. NAD(+) is bound by residues Asn250, 279 to 284 (GYGDVG), Glu302, Asn337, 358 to 360 (IGH), and Asn406.

Belongs to the adenosylhomocysteinase family. It depends on NAD(+) as a cofactor.

It is found in the cytoplasm. The catalysed reaction is S-adenosyl-L-homocysteine + H2O = L-homocysteine + adenosine. It functions in the pathway amino-acid biosynthesis; L-homocysteine biosynthesis; L-homocysteine from S-adenosyl-L-homocysteine: step 1/1. In terms of biological role, may play a key role in the regulation of the intracellular concentration of adenosylhomocysteine. This chain is Adenosylhomocysteinase, found in Mycobacterium leprae (strain Br4923).